Consider the following 593-residue polypeptide: Elongation factor 4 (593 aa).

The 180-residue stretch at 2-181 folds into the tr-type G domain; it reads DKIRNFCIIA…AVIERIPHPQ (180 aa). Residues 14 to 19 and 128 to 131 contribute to the GTP site; these read DHGKST and NKCD.

This sequence belongs to the TRAFAC class translation factor GTPase superfamily. Classic translation factor GTPase family. LepA subfamily.

It localises to the cell inner membrane. The catalysed reaction is GTP + H2O = GDP + phosphate + H(+). Its function is as follows. Required for accurate and efficient protein synthesis under certain stress conditions. May act as a fidelity factor of the translation reaction, by catalyzing a one-codon backward translocation of tRNAs on improperly translocated ribosomes. Back-translocation proceeds from a post-translocation (POST) complex to a pre-translocation (PRE) complex, thus giving elongation factor G a second chance to translocate the tRNAs correctly. Binds to ribosomes in a GTP-dependent manner. This is Elongation factor 4 from Bacteroides fragilis (strain ATCC 25285 / DSM 2151 / CCUG 4856 / JCM 11019 / LMG 10263 / NCTC 9343 / Onslow / VPI 2553 / EN-2).